A 504-amino-acid polypeptide reads, in one-letter code: Crh-like protein CRH12 (504 aa).

The first 18 residues, 1 to 18 (MYKQILTFLILFLRYILS), serve as a signal peptide directing secretion. Residues 19 to 270 (EFPDDPYEDD…YSKALTYSYG (252 aa)) enclose the GH16 domain. N-linked (GlcNAc...) asparagine glycosylation occurs at Asn34. A disulfide bridge connects residues Cys43 and Cys51. Glu138 functions as the Nucleophile in the catalytic mechanism. The active-site Proton donor is Glu143. Glu143 is a binding site for chitin. N-linked (GlcNAc...) asparagine glycosylation occurs at Asn161. Residues Lys221, Trp225, and Thr234 each coordinate chitin. The disordered stretch occupies residues 304–404 (KPTPKQETDD…LDISTQLPPL (101 aa)). The span at 316–329 (VLTSSKSQRVATTI) shows a compositional bias: polar residues. Over residues 356-378 (WETEQDETGTDDTENSDNEEEES) the composition is skewed to acidic residues. 3 N-linked (GlcNAc...) asparagine glycosylation sites follow: Asn407, Asn416, and Asn425. Gly479 carries the GPI-anchor amidated glycine lipid modification. Residues 480-504 (VSSILATSFSSVVIAEILVIVVLLL) constitute a propeptide, removed in mature form.

It belongs to the glycosyl hydrolase 16 family. CRH1 subfamily. In terms of processing, the GPI-anchor is attached to the protein in the endoplasmic reticulum and serves to target the protein to the cell surface. There, the glucosamine-inositol phospholipid moiety is cleaved off and the GPI-modified mannoprotein is covalently attached via its lipidless GPI glycan remnant to the 1,6-beta-glucan of the outer cell wall layer.

Its subcellular location is the secreted. The protein localises to the cell wall. It is found in the membrane. It catalyses the reaction Random endo-hydrolysis of N-acetyl-beta-D-glucosaminide (1-&gt;4)-beta-linkages in chitin and chitodextrins.. Its function is as follows. Dual chitinase/transglycosylase that plays a role in cell wall architecture. Chitinase and transglycosylase activities are coupled. Required for the polysaccharide cross-linking at the septa and the cell wall. More specifically, transfers chitin to 1,6-beta-glucan in the cell wall. Plays an important role in fungal pathogenesis via its functions in cell wall assembly and regeneration, filamentation, and adherence to host cells. This is Crh-like protein CRH12 (CRH12) from Candida albicans (strain SC5314 / ATCC MYA-2876) (Yeast).